The chain runs to 1362 residues: MSAESGPGTRLRNLPVMGDGLETSQMSTTQAQAQPQPANAASTNPPPPETSNPNKPKRQTNQLQYLLRVVLKTLWKHQFAWPFQQPVDAVKLNLPDYYKIIKTPMDMGTIKKRLENNYYWNAQECIQDFNTMFTNCYIYNKPGDDIVLMAEALEKLFLQKINELPTEETEIMIVQAKGRGRGRKETGTAKPGVSTVPNTTQASTPPQTQTPQPNPPPVQATPHPFPAVTPDLIVQTPVMTVVPPQPLQTPPPVPPQPQPPPAPAPQPVQSHPPIIAATPQPVKTKKGVKRKADTTTPTTIDPIHEPPSLPPEPKTTKLGQRRESSRPVKPPKKDVPDSQQHPAPEKSSKVSEQLKCCSGILKEMFAKKHAAYAWPFYKPVDVEALGLHDYCDIIKHPMDMSTIKSKLEAREYRDAQEFGADVRLMFSNCYKYNPPDHEVVAMARKLQDVFEMRFAKMPDEPEEPVVAVSSPAVPPPTKVVAPPSSSDSSSDSSSDSDSSTDDSEEERAQRLAELQEQLKAVHEQLAALSQPQQNKPKKKEKDKKEKKKEKHKRKEEVEENKKSKAKEPPPKKTKKNNSSNSNVSKKEPAPMKSKPPPTYESEEEDKCKPMSYEEKRQLSLDINKLPGEKLGRVVHIIQSREPSLKNSNPDEIEIDFETLKPSTLRELERYVTSCLRKKRKPQAEKVDVIAGSSKMKGFSSSESESSSESSSSDSEDSETEMAPKSKKKGHPGREQKKHHHHHHQQMQQAPAPVPQQPPPPPQQPPPPPPPQQQQQPPPPPPPPSMPQQAAPAMKSSPPPFIATQVPVLEPQLPGSVFDPIGHFTQPILHLPQPELPPHLPQPPEHSTPPHLNQHAVVSPPALHNALPQQPSRPSNRAAALPPKPARPPAVSPALTQTPLLPQPPMAQPPQVLLEDEEPPAPPLTSMQMQLYLQQLQKVQPPTPLLPSVKVQSQPPPPLPPPPHPSVQQQLQQQPPPPPPPQPQPPPQQQHQPPPRPVHLQPMQFSTHIQQPPPPQGQQPPHPPPGQQPPPPQPAKPQQVIQHHHSPRHHKSDPYSTGHLREAPSPLMIHSPQMSQFQSLTHQSPPQQNVQPKKQELRAASVVQPQPLVVVKEEKIHSPIIRSEPFSPSLRPEPPKHPESIKAPVHLPQRPEMKPVDVGRPVIRPPEQNAPPPGAPDKDKQKQEPKTPVAPKKDLKIKNMGSWASLVQKHPTTPSSTAKSSSDSFEQFRRAAREKEEREKALKAQAEHAEKEKERLRQERMRSREDEDALEQARRAHEEARRRQEQQQQQRQEQQQQQQQQAAAVAAAATPQAQSSQPQSMLDQQRELARKREQERRRREAMAATIDMNFQSDLLSIFEENLF.

Residues Met-1–Arg-58 form a disordered region. The segment covering Thr-23–Thr-43 has biased composition (low complexity). The Bromo 1 domain occupies Arg-58 to Leu-164. Lys-99 is covalently cross-linked (Glycyl lysine isopeptide (Lys-Gly) (interchain with G-Cter in SUMO2)). Disordered stretches follow at residues Val-174–Thr-229, Val-242–Glu-352, and Glu-463–Lys-615. The span at Pro-197 to Pro-211 shows a compositional bias: low complexity. Composition is skewed to pro residues over residues Gln-212–Ala-227 and Pro-243–Gln-266. Residues Gln-320–Pro-336 show a composition bias toward basic and acidic residues. The 110-residue stretch at Ser-348–Met-457 folds into the Bromo 2 domain. Phosphoserine is present on Ser-470. The segment covering Lys-478–Asp-497 has biased composition (low complexity). Phosphoserine; by CK2 occurs at positions 484, 488, 492, 494, 498, 499, and 503. An NPS region region spans residues Ser-484–Ser-503. The segment at Gln-524–Ser-579 is BID region. Positions Lys-535–Arg-553 are enriched in basic residues. Residues Lys-554–Pro-570 show a composition bias toward basic and acidic residues. Lys-585 is covalently cross-linked (Glycyl lysine isopeptide (Lys-Gly) (interchain with G-Cter in SUMO2)). Residues Glu-600–Gln-682 form the NET domain. Residue Ser-601 is modified to Phosphoserine. The span at Asp-605–Lys-615 shows a compositional bias: basic and acidic residues. Glycyl lysine isopeptide (Lys-Gly) (interchain with G-Cter in SUMO2) cross-links involve residues Lys-645 and Lys-694. Positions Cys-674–Ser-1100 are disordered. Low complexity predominate over residues Ser-699–Ser-712. Positions Lys-724–Gln-744 are enriched in basic residues. 3 stretches are compositionally biased toward pro residues: residues Ala-751–Met-785, Pro-833–Ser-846, and Pro-881–Val-890. Residues Met-926 to Gln-936 are compositionally biased toward low complexity. Pro residues-rich tracts occupy residues Gln-953–Pro-964, Gln-973–Pro-996, and Gln-1010–Ala-1034. The segment covering Gln-1041–Lys-1050 has biased composition (basic residues). The tract at residues Arg-1047–Phe-1362 is C-terminal (CTD) region. Lys-1050 participates in a covalent cross-link: Glycyl lysine isopeptide (Lys-Gly) (interchain with G-Cter in SUMO2). Polar residues predominate over residues Pro-1071–Pro-1091. Residue Lys-1111 is modified to N6-acetyllysine; alternate. A Glycyl lysine isopeptide (Lys-Gly) (interchain with G-Cter in SUMO1); alternate cross-link involves residue Lys-1111. Lys-1111 participates in a covalent cross-link: Glycyl lysine isopeptide (Lys-Gly) (interchain with G-Cter in SUMO2); alternate. The tract at residues His-1116–Glu-1339 is disordered. 2 positions are modified to phosphoserine: Ser-1117 and Ser-1126. Residues Pro-1175–Ile-1196 show a composition bias toward basic and acidic residues. Lys-1197 participates in a covalent cross-link: Glycyl lysine isopeptide (Lys-Gly) (interchain with G-Cter in SUMO2). Phosphoserine occurs at positions 1201 and 1204. Positions Thr-1211–Ser-1223 are enriched in low complexity. Residues Glu-1225–Glu-1284 are compositionally biased toward basic and acidic residues. Residues Gln-1285–Gln-1313 show a composition bias toward low complexity. The span at Gln-1323 to Glu-1339 shows a compositional bias: basic and acidic residues.

The protein belongs to the BET family. Interacts with p53/TP53; the interaction is direct. Interacts (via CTD region) with CDK9 and CCNT1, acting as an associated component of P-TEFb complex. Interacts with RELA (when acetylated at 'Lys-310'). Interacts (via NET domain) with NSD3, CHD4, BICRA and ATAD5. The interaction with BICRA bridges BRD4 to the GBAF complex. Interacts (via NET domain) with JMJD6 (via JmjC and N-terminal domains); the interaction is stronger in presence of ssRNA and recruits JMJD6 on distal enhancers. Interacts with NSD3. Interacts with NIPBL. As to quaternary structure, interacts with SMC2. Interacts with NCAPD3. In terms of assembly, (Microbial infection) Interacts with bovine papillomavirus type 1 regulatory protein E2. This interactions may serve for the tethering of viral genomes to host mitotic chromosomes allowing successful partitioning of the viral genome during cell division. (Microbial infection) Interacts with Epstein-Barr virus (EBV) protein EBNA1; this interaction facilitates transcriptional activation by EBNA1. As to quaternary structure, (Microbial infection) Interacts with human herpes virus-8 (HHV-8) protein LANA. Phosphorylation by CK2 disrupt the intramolecular binding between the bromo domain 2 and the NPS region and promotes binding between the NPS and the BID regions, leading to activate the protein and promote binding to acetylated histones. In absence of phosphorylation, BRD4 does not localize to p53/TP53 target gene promoters, phosphorylation promoting recruitment to p53/TP53 target promoters. As to expression, ubiquitously expressed.

The protein localises to the nucleus. The protein resides in the chromosome. Its activity is regulated as follows. Inhibited by JQ1, a thieno-triazolo-1,4-diazepine derivative, which specifically inhibits members of the BET family (BRD2, BRD3 and BRD4). The first bromo domain is inhibited by GSK778 (iBET-BD1), which specifically inhibits the first bromo domain of members of the BET family (BRD2, BRD3 and BRD4). The second bromo domain is inhibited by ABBV-744, which specifically inhibits the second bromo domain of members of the BET family (BRD2, BRD3 and BRD4). The second bromo domain is inhibited by GSK046 (iBET-BD2), which specifically inhibits the second bromo domain of members of the BET family (BRD2, BRD3 and BRD4). In terms of biological role, chromatin reader protein that recognizes and binds acetylated histones and plays a key role in transmission of epigenetic memory across cell divisions and transcription regulation. Remains associated with acetylated chromatin throughout the entire cell cycle and provides epigenetic memory for postmitotic G1 gene transcription by preserving acetylated chromatin status and maintaining high-order chromatin structure. During interphase, plays a key role in regulating the transcription of signal-inducible genes by associating with the P-TEFb complex and recruiting it to promoters. Also recruits P-TEFb complex to distal enhancers, so called anti-pause enhancers in collaboration with JMJD6. BRD4 and JMJD6 are required to form the transcriptionally active P-TEFb complex by displacing negative regulators such as HEXIM1 and 7SKsnRNA complex from P-TEFb, thereby transforming it into an active form that can then phosphorylate the C-terminal domain (CTD) of RNA polymerase II. Regulates differentiation of naive CD4(+) T-cells into T-helper Th17 by promoting recruitment of P-TEFb to promoters. Promotes phosphorylation of 'Ser-2' of the C-terminal domain (CTD) of RNA polymerase II. According to a report, directly acts as an atypical protein kinase and mediates phosphorylation of 'Ser-2' of the C-terminal domain (CTD) of RNA polymerase II; these data however need additional evidences in vivo. In addition to acetylated histones, also recognizes and binds acetylated RELA, leading to further recruitment of the P-TEFb complex and subsequent activation of NF-kappa-B. Also acts as a regulator of p53/TP53-mediated transcription: following phosphorylation by CK2, recruited to p53/TP53 specific target promoters. Acts as a chromatin insulator in the DNA damage response pathway. Inhibits DNA damage response signaling by recruiting the condensin-2 complex to acetylated histones, leading to chromatin structure remodeling, insulating the region from DNA damage response by limiting spreading of histone H2AX/H2A.x phosphorylation. This chain is Bromodomain-containing protein 4 (BRD4), found in Homo sapiens (Human).